We begin with the raw amino-acid sequence, 597 residues long: Integrator complex subunit 11 (597 aa).

Zn(2+)-binding residues include His68, His70, Asp72, His73, His157, and Asp178. The HXHXDH motif motif lies at 68–73; sequence HFHLDH. Glu203 is an active-site residue. His414 lines the Zn(2+) pocket. Lys462 is a 1D-myo-inositol hexakisphosphate binding site.

Belongs to the metallo-beta-lactamase superfamily. RNA-metabolizing metallo-beta-lactamase-like family. INTS11 subfamily. As to quaternary structure, belongs to the multiprotein complex Integrator, at least composed of IntS1, IntS2, IntS3, IntS4, omd/IntS5, IntS6, defl/IntS7, IntS8, IntS9, IntS10, IntS11, IntS12, asun/IntS13, IntS14 and IntS15. The core complex associates with protein phosphatase 2A subunits mts/PP2A and Pp2A-29B, to form the Integrator-PP2A (INTAC) complex. IntS11 is part of the RNA endonuclease subcomplex, composed of IntS4, IntS9, IntS11 and inositol hexakisphosphate (InsP6). Interacts with Brat1; interaction is required for the assembly of the RNA endonuclease subcomplex and inhibits the endonuclease activity of IntS11 before formation of mature integrator complex. It depends on Zn(2+) as a cofactor. In terms of tissue distribution, expressed in neurons and glia of the larval and adult brain.

It is found in the nucleus. The protein localises to the cytoplasm. It localises to the cytosol. Its activity is regulated as follows. The RNA endonuclease activity is inhibited by Brat1 that forms hyrogen bond and hydrophobic interactions with the active site. RNA endonuclease component of the integrator complex, a multiprotein complex that terminates RNA polymerase II (Pol II) transcription in the promoter-proximal region of genes. The integrator complex provides a quality checkpoint during transcription elongation by driving premature transcription termination of transcripts that are unfavorably configured for transcriptional elongation: the complex terminates transcription by (1) catalyzing dephosphorylation of the C-terminal domain (CTD) of Pol II subunit Polr2A/Rbp1 and Spt5, and (2) degrading the exiting nascent RNA transcript via endonuclease activity. The integrator complex is also involved in the 3'-end processing of the U7 snRNA, and also the spliceosomal snRNAs U1, U2, U4 and U5. Within the integrator complex, IntS11 constitutes the RNA endonuclease subunit that degrades exiting nascent RNA transcripts. This is Integrator complex subunit 11 from Drosophila melanogaster (Fruit fly).